The chain runs to 652 residues: UvrABC system protein C (652 aa).

Residues 19 to 96 (KTSGVYLWKD…IKKHKPRYNI (78 aa)) form the GIY-YIG domain. Positions 203–238 (EDVSGTLKEKMKEAAEKKEFEKAARLRDGIQAVYAL) constitute a UVR domain.

It belongs to the UvrC family. As to quaternary structure, interacts with UvrB in an incision complex.

It is found in the cytoplasm. In terms of biological role, the UvrABC repair system catalyzes the recognition and processing of DNA lesions. UvrC both incises the 5' and 3' sides of the lesion. The N-terminal half is responsible for the 3' incision and the C-terminal half is responsible for the 5' incision. This Treponema denticola (strain ATCC 35405 / DSM 14222 / CIP 103919 / JCM 8153 / KCTC 15104) protein is UvrABC system protein C.